The chain runs to 74 residues: MPKKGLHPQWYPEAKVICNGEVVMTVGSTKPELKVDVWSGNHPFFTGSQKIIDSEGRVEKFMRKYGMSGGKKAK.

It belongs to the bacterial ribosomal protein bL31 family. Type A subfamily. Part of the 50S ribosomal subunit.

In terms of biological role, binds the 23S rRNA. This is Large ribosomal subunit protein bL31 from Synechococcus sp. (strain JA-2-3B'a(2-13)) (Cyanobacteria bacterium Yellowstone B-Prime).